A 181-amino-acid chain; its full sequence is Ribulose bisphosphate carboxylase small subunit, chloroplastic 2 (181 aa).

Residues 1 to 57 (MAFLIMSSAAAVATGTNAAQASMIAPFTGLKSATSFPVSRKQNLDITSIASNGGRVQ) constitute a chloroplast transit peptide.

This sequence belongs to the RuBisCO small chain family. Heterohexadecamer of 8 large and 8 small subunits.

It is found in the plastid. The protein localises to the chloroplast. Its function is as follows. RuBisCO catalyzes two reactions: the carboxylation of D-ribulose 1,5-bisphosphate, the primary event in carbon dioxide fixation, as well as the oxidative fragmentation of the pentose substrate. Both reactions occur simultaneously and in competition at the same active site. Although the small subunit is not catalytic it is essential for maximal activity. The chain is Ribulose bisphosphate carboxylase small subunit, chloroplastic 2 from Nicotiana sylvestris (Wood tobacco).